The chain runs to 164 residues: tRNA (cytidine(34)-2'-O)-methyltransferase (164 aa).

Positions 80, 102, 124, and 132 each coordinate S-adenosyl-L-methionine.

Belongs to the class IV-like SAM-binding methyltransferase superfamily. RNA methyltransferase TrmH family. TrmL subfamily. As to quaternary structure, homodimer.

The protein localises to the cytoplasm. It catalyses the reaction cytidine(34) in tRNA + S-adenosyl-L-methionine = 2'-O-methylcytidine(34) in tRNA + S-adenosyl-L-homocysteine + H(+). The catalysed reaction is 5-carboxymethylaminomethyluridine(34) in tRNA(Leu) + S-adenosyl-L-methionine = 5-carboxymethylaminomethyl-2'-O-methyluridine(34) in tRNA(Leu) + S-adenosyl-L-homocysteine + H(+). In terms of biological role, methylates the ribose at the nucleotide 34 wobble position in the two leucyl isoacceptors tRNA(Leu)(CmAA) and tRNA(Leu)(cmnm5UmAA). Catalyzes the methyl transfer from S-adenosyl-L-methionine to the 2'-OH of the wobble nucleotide. The polypeptide is tRNA (cytidine(34)-2'-O)-methyltransferase (Polaromonas sp. (strain JS666 / ATCC BAA-500)).